The chain runs to 69 residues: UPF0346 protein YuiB (69 aa).

The protein belongs to the UPF0346 family.

The chain is UPF0346 protein YuiB (yuiB) from Lactococcus lactis subsp. lactis (strain IL1403) (Streptococcus lactis).